Here is a 196-residue protein sequence, read N- to C-terminus: Somatotropin (196 aa).

The first 18 residues, 1–18, serve as a signal peptide directing secretion; sequence MEKVVLLLSVLSLGVVCP. Glutamine 19 is subject to Pyrrolidone carboxylic acid. Position 35 (histidine 35) interacts with Zn(2+). A disulfide bond links cysteine 69 and cysteine 169. Glutamate 178 lines the Zn(2+) pocket. Cysteines 186 and 194 form a disulfide.

It belongs to the somatotropin/prolactin family.

It is found in the secreted. Its function is as follows. Growth hormone plays an important role in growth control and is involved in the regulation of several anabolic processes. Implicated as an osmoregulatory substance important for seawater adaptation. This chain is Somatotropin (gh), found in Siganus guttatus (Orange-spotted spinefoot).